The primary structure comprises 273 residues: DNA repair protein RecO (273 aa).

It belongs to the RecO family.

Involved in DNA repair and RecF pathway recombination. This is DNA repair protein RecO from Mycolicibacterium gilvum (strain PYR-GCK) (Mycobacterium gilvum (strain PYR-GCK)).